We begin with the raw amino-acid sequence, 426 residues long: Mothers against decapentaplegic homolog 7 (426 aa).

The disordered stretch occupies residues 13-55 (LWRSRAPGGEDEEEGAGGGGGGGELRGEGATDSRAHGAGGGGP). Over residues 37 to 47 (LRGEGATDSRA) the composition is skewed to basic and acidic residues. 2 positions are modified to N6-acetyllysine; alternate: Lys64 and Lys70. Glycyl lysine isopeptide (Lys-Gly) (interchain with G-Cter in ubiquitin); alternate cross-links involve residues Lys64 and Lys70. Residues 64 to 207 (KAVRGAKGHH…LSRLCELESP (144 aa)) enclose the MH1 domain. The Zn(2+) site is built by Cys125, Cys180, Cys192, and His197. The short motif at 208-211 (PPPY) is the PY-motif element. Residues 208 to 217 (PPPYSRYPMD) are important for interaction with SMURF2. Ser249 is modified (phosphoserine). The MH2 domain maps to 261 to 426 (WCVVAYWEEK…CWLEVIFNSR (166 aa)).

The protein belongs to the dwarfin/SMAD family. Interacts with WWP1. Interacts with COPS5. Interacts with NEDD4L. Interacts with STAMBP. Interacts with RNF111, AXIN1 and AXIN2. Interacts with PPP1R15A. Interacts (via MH2 domain) with EP300. Interacts with ACVR1B, SMURF1, SMURF2 and TGFBR1; SMAD7 recruits SMURF1 and SMURF2 to the TGF-beta receptor and regulates its degradation. Interacts with PDPK1 (via PH domain). Interacts with TSC22D1/TSC-22; the interaction requires TGF-beta and the interaction is inhibited by TGFBR1. In terms of processing, phosphorylation on Ser-249 does not affect its stability, nuclear localization or inhibitory function in TGFB signaling; however it affects its ability to regulate transcription. Phosphorylated by PDPK1. Ubiquitinated by WWP1. Polyubiquitinated by RNF111, which is enhanced by AXIN1 and promotes proteasomal degradation. In response to TGF-beta, ubiquitinated by SMURF1; which promotes its degradation. Post-translationally, acetylation prevents ubiquitination and degradation mediated by SMURF1. In terms of tissue distribution, ubiquitous with higher expression in the lung and vascular endothelium.

It is found in the nucleus. It localises to the cytoplasm. In terms of biological role, antagonist of signaling by TGF-beta (transforming growth factor) type 1 receptor superfamily members; has been shown to inhibit TGF-beta (Transforming growth factor) and activin signaling by associating with their receptors thus preventing SMAD2 access. Functions as an adapter to recruit SMURF2 to the TGF-beta receptor complex. Also acts by recruiting the PPP1R15A-PP1 complex to TGFBR1, which promotes its dephosphorylation. Positively regulates PDPK1 kinase activity by stimulating its dissociation from the 14-3-3 protein YWHAQ which acts as a negative regulator. In Homo sapiens (Human), this protein is Mothers against decapentaplegic homolog 7 (SMAD7).